A 138-amino-acid polypeptide reads, in one-letter code: Ribonuclease kappa-A (138 aa).

The first 24 residues, 1–24, serve as a signal peptide directing secretion; it reads MVLYFSPVLTFFLANFFNSKSTTT. Over 25 to 75 the chain is Extracellular; the sequence is ENLQVFLVENQHRDSKRKINPTFSKKGIEVRQQNENLWSKIVALRFDYSVW. The helical transmembrane segment at 76-96 threads the bilayer; the sequence is GIIQLVLMMGLFFYINSVALI. Topologically, residues 97-138 are cytoplasmic; it reads EDLPIDEEFNSVEEFYTAATSAYNQNAYTVGLPVHLCAYASI.

It belongs to the RNase K family.

It is found in the membrane. Its function is as follows. Endoribonuclease. This chain is Ribonuclease kappa-A, found in Ceratitis capitata (Mediterranean fruit fly).